The following is a 290-amino-acid chain: Syntaxin-1A (290 aa).

The interval 1 to 21 is disordered; that stretch reads MTKDRLAALQAAQSDDEDMPE. Residues 1 to 267 lie on the Cytoplasmic side of the membrane; the sequence is MTKDRLAALQ…KYQSKARRKK (267 aa). The t-SNARE coiled-coil homology domain occupies 194–256; that stretch reads LADIEARHAD…QTATQDTKKA (63 aa). A helical; Anchor for type IV membrane protein membrane pass occupies residues 268–289; the sequence is IWIAICVLIAIIILVVFLAIYL. T290 is a topological domain (vesicular).

This sequence belongs to the syntaxin family. (Microbial infection) Targeted and hydrolyzed by the light chain (LC) of P.bifermentans PMP1. Cleavage probably inhibits neurotransmitter release.

It is found in the cytoplasmic vesicle. The protein localises to the secretory vesicle. Its subcellular location is the synaptic vesicle membrane. Plays a critical role in several secretory processes. The protein is Syntaxin-1A of Anopheles gambiae (African malaria mosquito).